Consider the following 177-residue polypeptide: MVATQQGPDRPGIDDPGRGRRIAIDVGSVRIGVASSDPDGILATPVETVPRSKERGPDAPDIRRIIAIVSEYEAVEVIVGLPQTLRGEQGKAAGIATAFAKRLQRAVEPIPVRLSDERLTTVTAARNLRESGVKARGQRPMIDQAAAVEILQGWLDERSRAVKPGESSKDAALEGDL.

Positions 1-20 (MVATQQGPDRPGIDDPGRGR) are disordered.

It belongs to the YqgF nuclease family.

The protein resides in the cytoplasm. Could be a nuclease involved in processing of the 5'-end of pre-16S rRNA. The sequence is that of Putative pre-16S rRNA nuclease from Rhodococcus erythropolis (strain PR4 / NBRC 100887).